We begin with the raw amino-acid sequence, 947 residues long: DNA polymerase (947 aa).

This sequence belongs to the DNA polymerase type-B family.

It carries out the reaction DNA(n) + a 2'-deoxyribonucleoside 5'-triphosphate = DNA(n+1) + diphosphate. In Red sea bream iridovirus (RSIV), this protein is DNA polymerase.